A 341-amino-acid chain; its full sequence is MKAEYGEIKDNYGEIRLFPESIDDLWHLQHLVSPGDLVFATTFRSVEGATDKIRPEKVEKRPVRLGVRVEKVEFSHHGVRLRISGIIEHGMDTGAYHTINVETGYEISVIRRWRPVDLERLDRAVKASVYGVIHILTLEEGEAELFRLRQYGPESVITITAGSGKGGETETRTGFFDTVIKSIAEVSGPMVIAGPGFVKEDFVRYAKNKNCAPAGRAIVAETRRIGRGAVQDVIGAGTLEKLIGDLQLSREVRLMDEVLLRISRDGAIAYGYKDVATAIEYGAVDEVLLADSLLRDRAIVPLIESAERMQAKIIVLSTEFEPGERLAALGGIAALLRYKMG.

This sequence belongs to the eukaryotic release factor 1 family. Pelota subfamily. In terms of assembly, monomer. It depends on a divalent metal cation as a cofactor.

Its subcellular location is the cytoplasm. In terms of biological role, may function in recognizing stalled ribosomes, interact with stem-loop structures in stalled mRNA molecules, and effect endonucleolytic cleavage of the mRNA. May play a role in the release non-functional ribosomes and degradation of damaged mRNAs. Has endoribonuclease activity. In Methanoregula boonei (strain DSM 21154 / JCM 14090 / 6A8), this protein is Protein pelota homolog.